Reading from the N-terminus, the 88-residue chain is Translation initiation factor IF-1 2 (88 aa).

Residues 1–72 (MAKEELIELQ…TKGRINFRHK (72 aa)) enclose the S1-like domain.

This sequence belongs to the IF-1 family. In terms of assembly, component of the 30S ribosomal translation pre-initiation complex which assembles on the 30S ribosome in the order IF-2 and IF-3, IF-1 and N-formylmethionyl-tRNA(fMet); mRNA recruitment can occur at any time during PIC assembly.

The protein localises to the cytoplasm. One of the essential components for the initiation of protein synthesis. Stabilizes the binding of IF-2 and IF-3 on the 30S subunit to which N-formylmethionyl-tRNA(fMet) subsequently binds. Helps modulate mRNA selection, yielding the 30S pre-initiation complex (PIC). Upon addition of the 50S ribosomal subunit IF-1, IF-2 and IF-3 are released leaving the mature 70S translation initiation complex. In Bordetella avium (strain 197N), this protein is Translation initiation factor IF-1 2.